The sequence spans 302 residues: S-crystallin SL4 (302 aa).

3 consecutive repeat copies span residues 45-54, 55-64, and 65-74. The 4 X approximate tandem repeats of G-G-Y-[AYP]-V-[QK]-[SG]-R-G-D stretch occupies residues 45–84; the sequence is GGYAVQSRGDGGYYVKSRGDGGYPVQGRGDTGYSSQTRSD. 3 short sequence motifs (cell attachment site) span residues 52 to 54, 62 to 64, and 72 to 74; these read RGD. The tract at residues 68 to 92 is disordered; it reads PVQGRGDTGYSSQTRSDDACLGQGR. The stretch at 75 to 84 is one 4; approximate repeat; the sequence is TGYSSQTRSD. Residues 113–115 carry the Cell attachment site motif; that stretch reads RGD. The interval 118–205 is disordered; the sequence is SDINSGLYSG…ESASRRSRNH (88 aa). 2 stretches are compositionally biased toward basic and acidic residues: residues 129–166 and 177–192; these read RMDDSCHTSESRRMDDPCGTDESRRLDVPCHSDDHYRS and AEDRRGGHSDSHRIDI. Residues 183-302 form the GST C-terminal domain; it reads GHSDSHRIDI…YIKRRYQSDF (120 aa).

It belongs to the GST superfamily.

Its function is as follows. S-crystallins are structural components of squids and octopi eye lens. The chain is S-crystallin SL4 from Nototodarus sloanii (Wellington flying squid).